The sequence spans 342 residues: 4-hydroxy-3-methylbut-2-enyl diphosphate reductase (342 aa).

Cys-47 is a [4Fe-4S] cluster binding site. His-78 and His-111 together coordinate (2E)-4-hydroxy-3-methylbut-2-enyl diphosphate. Positions 78 and 111 each coordinate dimethylallyl diphosphate. Isopentenyl diphosphate is bound by residues His-78 and His-111. Cys-133 is a binding site for [4Fe-4S] cluster. Residue His-161 participates in (2E)-4-hydroxy-3-methylbut-2-enyl diphosphate binding. His-161 provides a ligand contact to dimethylallyl diphosphate. His-161 contributes to the isopentenyl diphosphate binding site. Glu-163 functions as the Proton donor in the catalytic mechanism. Thr-201 serves as a coordination point for (2E)-4-hydroxy-3-methylbut-2-enyl diphosphate. Cys-231 lines the [4Fe-4S] cluster pocket. Ser-259, Ser-260, Asn-261, and Ser-303 together coordinate (2E)-4-hydroxy-3-methylbut-2-enyl diphosphate. Positions 259, 260, 261, and 303 each coordinate dimethylallyl diphosphate. Ser-259, Ser-260, Asn-261, and Ser-303 together coordinate isopentenyl diphosphate.

It belongs to the IspH family. [4Fe-4S] cluster serves as cofactor.

It catalyses the reaction isopentenyl diphosphate + 2 oxidized [2Fe-2S]-[ferredoxin] + H2O = (2E)-4-hydroxy-3-methylbut-2-enyl diphosphate + 2 reduced [2Fe-2S]-[ferredoxin] + 2 H(+). The catalysed reaction is dimethylallyl diphosphate + 2 oxidized [2Fe-2S]-[ferredoxin] + H2O = (2E)-4-hydroxy-3-methylbut-2-enyl diphosphate + 2 reduced [2Fe-2S]-[ferredoxin] + 2 H(+). It participates in isoprenoid biosynthesis; dimethylallyl diphosphate biosynthesis; dimethylallyl diphosphate from (2E)-4-hydroxy-3-methylbutenyl diphosphate: step 1/1. Its pathway is isoprenoid biosynthesis; isopentenyl diphosphate biosynthesis via DXP pathway; isopentenyl diphosphate from 1-deoxy-D-xylulose 5-phosphate: step 6/6. Catalyzes the conversion of 1-hydroxy-2-methyl-2-(E)-butenyl 4-diphosphate (HMBPP) into a mixture of isopentenyl diphosphate (IPP) and dimethylallyl diphosphate (DMAPP). Acts in the terminal step of the DOXP/MEP pathway for isoprenoid precursor biosynthesis. This Anaplasma marginale (strain Florida) protein is 4-hydroxy-3-methylbut-2-enyl diphosphate reductase.